The primary structure comprises 396 residues: Tryptophan synthase beta chain (396 aa).

N6-(pyridoxal phosphate)lysine is present on K86.

It belongs to the TrpB family. As to quaternary structure, tetramer of two alpha and two beta chains. The cofactor is pyridoxal 5'-phosphate.

It catalyses the reaction (1S,2R)-1-C-(indol-3-yl)glycerol 3-phosphate + L-serine = D-glyceraldehyde 3-phosphate + L-tryptophan + H2O. The protein operates within amino-acid biosynthesis; L-tryptophan biosynthesis; L-tryptophan from chorismate: step 5/5. In terms of biological role, the beta subunit is responsible for the synthesis of L-tryptophan from indole and L-serine. The polypeptide is Tryptophan synthase beta chain (Vibrio campbellii (strain ATCC BAA-1116)).